The sequence spans 107 residues: Large ribosomal subunit protein uL24 (107 aa).

This sequence belongs to the universal ribosomal protein uL24 family. As to quaternary structure, part of the 50S ribosomal subunit.

Its function is as follows. One of two assembly initiator proteins, it binds directly to the 5'-end of the 23S rRNA, where it nucleates assembly of the 50S subunit. One of the proteins that surrounds the polypeptide exit tunnel on the outside of the subunit. In Nitratidesulfovibrio vulgaris (strain ATCC 29579 / DSM 644 / CCUG 34227 / NCIMB 8303 / VKM B-1760 / Hildenborough) (Desulfovibrio vulgaris), this protein is Large ribosomal subunit protein uL24.